The chain runs to 479 residues: Ankyrin repeat, SAM and basic leucine zipper domain-containing protein 1 (479 aa).

Residues S22 and S24 each carry the phosphoserine modification. ANK repeat units lie at residues 49-78 (EKNE…SVDS), 82-111 (YGWT…NASF), 114-148 (DKQT…DPNV), 152-181 (RLMT…EVNT), 185-214 (NGYT…NKML), and 218-247 (DGKT…PLEG). Positions 276–338 (SYTALGDLEI…KILDALKELQ (63 aa)) constitute an SAM domain.

Interacts with DDX4, PIWIL1, RANBP9 and TDRD1.

Its subcellular location is the cytoplasm. In terms of biological role, plays a central role during spermatogenesis by repressing transposable elements and preventing their mobilization, which is essential for the germline integrity. Acts via the piRNA metabolic process, which mediates the repression of transposable elements during meiosis by forming complexes composed of piRNAs and Piwi proteins and governs the methylation and subsequent repression of transposons. Its association with pi-bodies suggests a participation in the primary piRNAs metabolic process. Required prior to the pachytene stage to facilitate the production of multiple types of piRNAs, including those associated with repeats involved in the regulation of retrotransposons. May act by mediating protein-protein interactions during germ cell maturation. The sequence is that of Ankyrin repeat, SAM and basic leucine zipper domain-containing protein 1 (ASZ1) from Rhinolophus ferrumequinum (Greater horseshoe bat).